A 185-amino-acid polypeptide reads, in one-letter code: Orotate phosphoribosyltransferase (185 aa).

5-phospho-alpha-D-ribose 1-diphosphate contacts are provided by residues Arg-98, Lys-99, Lys-102, His-104, and 128–136; that span reads EDVTTTGGS. The orotate site is built by Thr-132 and Arg-160.

Belongs to the purine/pyrimidine phosphoribosyltransferase family. PyrE subfamily. As to quaternary structure, homodimer. Mg(2+) is required as a cofactor.

The enzyme catalyses orotidine 5'-phosphate + diphosphate = orotate + 5-phospho-alpha-D-ribose 1-diphosphate. Its pathway is pyrimidine metabolism; UMP biosynthesis via de novo pathway; UMP from orotate: step 1/2. In terms of biological role, catalyzes the transfer of a ribosyl phosphate group from 5-phosphoribose 1-diphosphate to orotate, leading to the formation of orotidine monophosphate (OMP). The polypeptide is Orotate phosphoribosyltransferase (Bradyrhizobium sp. (strain BTAi1 / ATCC BAA-1182)).